The chain runs to 188 residues: MKVLFATGNIGKYHEAKQILARYGIEVERVDLDYPELQSDSLEEIAAYGARYCAESLGQPVIVEDSGLFIEALNGFPGPYSAYVFDTIGNEGILKLLEGEENRKAEFISVVGYCEPGGRPVTFTGEIRGRIAEEPRGEEGFGYDPIFIPEGEDSTFAELGVEEKCKISHRTKALERFAEWYKNNVAGR.

7–12 contributes to the substrate binding site; the sequence is TGNIGK. Residues glutamate 36 and aspartate 65 each contribute to the Mg(2+) site. The active-site Proton acceptor is the aspartate 65. Substrate contacts are provided by residues serine 66, 141 to 144, lysine 164, and 169 to 170; these read FGYD and HR.

The protein belongs to the HAM1 NTPase family. As to quaternary structure, homodimer. Mg(2+) is required as a cofactor.

It carries out the reaction XTP + H2O = XMP + diphosphate + H(+). The enzyme catalyses dITP + H2O = dIMP + diphosphate + H(+). It catalyses the reaction ITP + H2O = IMP + diphosphate + H(+). Pyrophosphatase that catalyzes the hydrolysis of nucleoside triphosphates to their monophosphate derivatives, with a high preference for the non-canonical purine nucleotides XTP (xanthosine triphosphate), dITP (deoxyinosine triphosphate) and ITP. Seems to function as a house-cleaning enzyme that removes non-canonical purine nucleotides from the nucleotide pool, thus preventing their incorporation into DNA/RNA and avoiding chromosomal lesions. The sequence is that of dITP/XTP pyrophosphatase from Methanopyrus kandleri (strain AV19 / DSM 6324 / JCM 9639 / NBRC 100938).